The chain runs to 552 residues: Beta-hexosaminidase A (552 aa).

A signal peptide spans 1-15 (MRLIVLSLLFTSTLA). Residue Asn-44 is glycosylated (N-linked (GlcNAc...) asparagine). The active-site Proton donor is the Glu-322. Residues Asn-348, Asn-409, and Asn-457 are each glycosylated (N-linked (GlcNAc...) asparagine).

This sequence belongs to the glycosyl hydrolase 20 family.

Its subcellular location is the lysosome. It carries out the reaction Hydrolysis of terminal non-reducing N-acetyl-D-hexosamine residues in N-acetyl-beta-D-hexosaminides.. Functionally, responsible for the degradation of GM2 gangliosides, and a variety of other molecules containing terminal N-acetyl hexosamines. Degrades chitotriose. This Caenorhabditis briggsae protein is Beta-hexosaminidase A.